The following is a 345-amino-acid chain: N-acetyl-gamma-glutamyl-phosphate reductase (345 aa).

Residue cysteine 149 is part of the active site.

It belongs to the NAGSA dehydrogenase family. Type 1 subfamily.

Its subcellular location is the cytoplasm. The enzyme catalyses N-acetyl-L-glutamate 5-semialdehyde + phosphate + NADP(+) = N-acetyl-L-glutamyl 5-phosphate + NADPH + H(+). It participates in amino-acid biosynthesis; L-arginine biosynthesis; N(2)-acetyl-L-ornithine from L-glutamate: step 3/4. Functionally, catalyzes the NADPH-dependent reduction of N-acetyl-5-glutamyl phosphate to yield N-acetyl-L-glutamate 5-semialdehyde. The protein is N-acetyl-gamma-glutamyl-phosphate reductase of Bacillus cereus (strain ATCC 10987 / NRS 248).